Here is a 783-residue protein sequence, read N- to C-terminus: MAPPQAPVQPPKRRRIGVLTSGGDAPGMNGVVRAVVRMAIHSDCEAFAVYEGYEGLVNGGDMIRQLHWEDVRGWLSRGGTLIGSARCMTFRERPGRLRAAKNMVLRGIDALVVCGGDGSLTGADVFRSEWPGLLKELVETGELTEEQVKPYQILNIVGLVGSIDNDMSGTDATIGCYSSLTRICDAVDDVFDTAFSHQRGFVIEVMGRHCGWLALMSAISTGADWLFVPEMPPKDGWEDDMCAIITKNRKERGKRRTIVIVAEGAQDRHLNKISSSKIKDILTERLNLDTRVTVLGHTQRGGAACAYDRWLSTLQGVEAVRAVLDMKPEAPSPVITIRENKILRMPLMDAVQHTKTVTKHIQNKEFAEAMALRDSEFKEYHFSYINTSTPDHPKLLLPENKRMRIGIIHVGAPAGGMNQATRAAVAYCLTRGHTPLAIHNGFPGLCRHYDDTPICSVREVAWQESDAWVNEGGSDIGTNRGLPGDDLATTAKSFKKFGFDALFVVGGFEAFTAVSQLRQAREKYPEFKIPMTVLPATISNNVPGTEYSLGSDTCLNTLIDFCDAIRQSASSSRRRVFVIETQGGKSGYIATTAGLSVGAVAVYIPEEGIDIKMLARDIDFLRDNFARDKGANRAGKIILRNECASSTYTTQVVADMIKEEAKGRFESRAAVPGHFQQGGKPSPMDRIRALRMATKCMLHLESYAGKSADEIAADELSASVIGIKGSQVLFSPMGGETGLEATETDWARRRPKTEFWLELQDTVNILSGRASVNNATWSCYENA.

Pro residues predominate over residues 1-10 (MAPPQAPVQP). Residues 1 to 20 (MAPPQAPVQPPKRRRIGVLT) are disordered. The segment at 1-389 (MAPPQAPVQP…YHFSYINTST (389 aa)) is N-terminal catalytic PFK domain 1. ATP contacts are provided by residues glycine 23, 86–87 (RC), and 116–119 (GDGS). Aspartate 117 lines the Mg(2+) pocket. Residues 162-164 (SID), arginine 199, 206-208 (MGR), glutamate 263, arginine 291, and 297-300 (HTQR) each bind substrate. Aspartate 164 serves as the catalytic Proton acceptor. Residues 390 to 403 (PDHPKLLLPENKRM) form an interdomain linker region. The tract at residues 404 to 783 (RIGIIHVGAP…NATWSCYENA (380 aa)) is C-terminal regulatory PFK domain 2. Beta-D-fructose 2,6-bisphosphate-binding positions include arginine 480, 537 to 541 (TISNN), arginine 575, 582 to 584 (QGG), glutamate 642, arginine 668, 674 to 677 (HFQQ), and arginine 749.

This sequence belongs to the phosphofructokinase type A (PFKA) family. ATP-dependent PFK group I subfamily. Eukaryotic two domain clade 'E' sub-subfamily. As to quaternary structure, homotetramer. The cofactor is Mg(2+).

The protein localises to the cytoplasm. The enzyme catalyses beta-D-fructose 6-phosphate + ATP = beta-D-fructose 1,6-bisphosphate + ADP + H(+). The protein operates within carbohydrate degradation; glycolysis; D-glyceraldehyde 3-phosphate and glycerone phosphate from D-glucose: step 3/4. With respect to regulation, allosterically activated by ADP, AMP, or fructose 2,6-bisphosphate, and allosterically inhibited by ATP or citrate. In terms of biological role, catalyzes the phosphorylation of D-fructose 6-phosphate to fructose 1,6-bisphosphate by ATP, the first committing step of glycolysis. The sequence is that of ATP-dependent 6-phosphofructokinase (pfkA) from Aspergillus niger.